We begin with the raw amino-acid sequence, 813 residues long: Leucine--tRNA ligase (813 aa).

A 'HIGH' region motif is present at residues 41–51; that stretch reads PYPSGTLHMGH. The 'KMSKS' region signature appears at 575-579; sequence KMSKS. Lys-578 lines the ATP pocket.

This sequence belongs to the class-I aminoacyl-tRNA synthetase family.

It localises to the cytoplasm. The enzyme catalyses tRNA(Leu) + L-leucine + ATP = L-leucyl-tRNA(Leu) + AMP + diphosphate. In Francisella tularensis subsp. holarctica (strain FTNF002-00 / FTA), this protein is Leucine--tRNA ligase.